Reading from the N-terminus, the 614-residue chain is Zinc finger and SCAN domain-containing protein 2 (614 aa).

3 disordered regions span residues 1–25 (MAAEVPAVSTPLSPLVQVPQEEDEQ), 42–73 (AVLQEDGPESEPFPQSAGKGSPQEEDAAEGPQ), and 162–200 (NISGGEGGQQSDGDSDFERDCGSGGAQGHAPGEDPRVVP). In terms of domain architecture, SCAN box spans 69-127 (AEGPQGALVRFRELCRRWLRPEVHTKEQMLTVLPREIQAWLQEHRPESSEEAVALVEDL). 14 consecutive C2H2-type zinc fingers follow at residues 222–244 (YECPQCGKTFSRKSHLITHERTH), 250–272 (YKCDECGKSFSDGSNFSRHQTTH), 278–300 (YKCRDCGKSFSRSANLITHQRIH), 306–328 (FQCAECGKSFSRSPNLIAHQRTH), 334–356 (YSCPECGKSFGNRSSLNTHQGIH), 362–384 (YACKECGESFSYNSNLIRHQRIH), 390–412 (YKCTECGQKFSQSSALITHRRTH), 418–440 (YQCGECGKNFSRSSNLATHRRTH), 446–468 (YKCGLCGKSFSQSSSLIAHQGTH), 474–496 (YECLTCGESFSWSSNLIKHQRTH), 502–524 (YRCGDCGKGFSQRSQLVVHQRTH), 530–552 (YKCLMCGKSFSRGSILVMHQRAH), 558–580 (YRCPECGKGFSWNSVLIIHQRIH), and 586–608 (YRCPECGKGFSNSSNFITHQRTH).

Belongs to the krueppel C2H2-type zinc-finger protein family. In terms of tissue distribution, in the adult, predominantly found in spermatids. Also present in the embryo.

The protein localises to the nucleus. Its function is as follows. May be involved in transcriptional regulation during the post-meiotic stages of spermatogenesis. This is Zinc finger and SCAN domain-containing protein 2 (Zscan2) from Mus musculus (Mouse).